Reading from the N-terminus, the 62-residue chain is Conotoxin Mi5.2 (62 aa).

A signal peptide spans 1–19; that stretch reads MRCVPVFIILLLLIPSASS. The propeptide occupies 20–50; the sequence is VDVQPLTRDDVPLASFLDDARRTLRSPWMTR.

Belongs to the conotoxin T superfamily. Post-translationally, contains 2 disulfide bonds that can be either 'C1-C3, C2-C4' or 'C1-C4, C2-C3', since these disulfide connectivities have been observed for conotoxins with cysteine framework V (for examples, see AC P0DQQ7 and AC P81755). Expressed by the venom duct.

The protein resides in the secreted. In Conus miles (Soldier cone), this protein is Conotoxin Mi5.2.